Consider the following 167-residue polypeptide: HTH-type transcriptional repressor YetL (167 aa).

In terms of domain architecture, HTH marR-type spans 26–160; the sequence is SLELFLSLFD…FVKMLGDLFE (135 aa). The H-T-H motif DNA-binding region spans 74-97; it reads PTELAKRSNVTKATITGLLDGLAR.

In terms of assembly, homodimer. The N- and C-terminal helices from both subunits stabilize YetL dimer via extensive intersubunit interactions.

Its activity is regulated as follows. Binding to the yetM cis sequence is clearly inhibited by kaempferol, morin, apigenin and luteolin, slightly inhibited by quercetin and galangin, but no inhibition is observed with the other flavonoids. Flavonoid binding may induce conformational changes and modulate interaction with DNA. Its function is as follows. Negatively regulates yetM expression and its own expression. Binds specifically to corresponding single sites in the divergent yetL and yetM promoter regions, with higher affinity to the yetM region. Recognizes a 28-mer operator of double-stranded DNA that contains a palindromic sequence. This Bacillus subtilis (strain 168) protein is HTH-type transcriptional repressor YetL (yetL).